A 248-amino-acid chain; its full sequence is ATP synthase subunit a, chloroplastic (248 aa).

5 helical membrane-spanning segments follow: residues 38–58, 96–116, 135–155, 200–220, and 221–241; these read QVLI…TIAV, VPFI…GALL, INTT…AGLA, LVVA…VMFL, and GLFT…AYIG.

This sequence belongs to the ATPase A chain family. In terms of assembly, F-type ATPases have 2 components, CF(1) - the catalytic core - and CF(0) - the membrane proton channel. CF(1) has five subunits: alpha(3), beta(3), gamma(1), delta(1), epsilon(1). CF(0) has four main subunits: a, b, b' and c.

It localises to the plastid. It is found in the chloroplast thylakoid membrane. Key component of the proton channel; it plays a direct role in the translocation of protons across the membrane. This Cycas taitungensis (Prince sago) protein is ATP synthase subunit a, chloroplastic.